The chain runs to 219 residues: 7-cyano-7-deazaguanine synthase (219 aa).

An ATP-binding site is contributed by 8 to 18 (LSGGMDSAVLL). Residues C185, C193, C196, and C199 each contribute to the Zn(2+) site.

This sequence belongs to the QueC family. Requires Zn(2+) as cofactor.

It catalyses the reaction 7-carboxy-7-deazaguanine + NH4(+) + ATP = 7-cyano-7-deazaguanine + ADP + phosphate + H2O + H(+). The protein operates within purine metabolism; 7-cyano-7-deazaguanine biosynthesis. Catalyzes the ATP-dependent conversion of 7-carboxy-7-deazaguanine (CDG) to 7-cyano-7-deazaguanine (preQ(0)). The sequence is that of 7-cyano-7-deazaguanine synthase from Desulfotalea psychrophila (strain LSv54 / DSM 12343).